The following is a 110-amino-acid chain: MEAKAVARFVRMSPRKVRLVADEIRGYAVGEALDILKFTNKRAIEPLTKVILSASANASVLNDKVDSNQLFIKKIYVDEGPIMKRFRPRARGRAARIRKRLSHITVVLSD.

The protein belongs to the universal ribosomal protein uL22 family. In terms of assembly, part of the 50S ribosomal subunit.

Its function is as follows. This protein binds specifically to 23S rRNA; its binding is stimulated by other ribosomal proteins, e.g. L4, L17, and L20. It is important during the early stages of 50S assembly. It makes multiple contacts with different domains of the 23S rRNA in the assembled 50S subunit and ribosome. Functionally, the globular domain of the protein is located near the polypeptide exit tunnel on the outside of the subunit, while an extended beta-hairpin is found that lines the wall of the exit tunnel in the center of the 70S ribosome. This Leptospira borgpetersenii serovar Hardjo-bovis (strain JB197) protein is Large ribosomal subunit protein uL22.